The chain runs to 260 residues: Thiamine thiazole synthase (260 aa).

NAD(+)-binding positions include alanine 36, 55 to 56 (EQ), glycine 63, and 154 to 156 (HVD). Residues aspartate 156 and histidine 171 each contribute to the Fe cation site. Methionine 224 lines the NAD(+) pocket. Arginine 234 contacts glycine.

It belongs to the THI4 family. As to quaternary structure, homooctamer; tetramer of dimers. It depends on Fe(2+) as a cofactor.

The enzyme catalyses hydrogen sulfide + glycine + NAD(+) = ADP-5-ethyl-4-methylthiazole-2-carboxylate + nicotinamide + 3 H2O + H(+). It participates in cofactor biosynthesis; thiamine diphosphate biosynthesis. Functionally, involved in the biosynthesis of the thiazole moiety of thiamine. Catalyzes the conversion of NAD and glycine to adenosine diphosphate 5-(2-hydroxyethyl)-4-methylthiazole-2-carboxylate (ADT), an adenylated thiazole intermediate, using free sulfide as a source of sulfur. The sequence is that of Thiamine thiazole synthase from Methanosarcina mazei (strain ATCC BAA-159 / DSM 3647 / Goe1 / Go1 / JCM 11833 / OCM 88) (Methanosarcina frisia).